Reading from the N-terminus, the 654-residue chain is Fructose-1,6-bisphosphatase class 3 (654 aa).

Residues 288–307 (NPAFKPKKRPDKHERLTQRE) are disordered. The span at 298-307 (DKHERLTQRE) shows a compositional bias: basic and acidic residues.

The protein belongs to the FBPase class 3 family. Requires Mn(2+) as cofactor.

It carries out the reaction beta-D-fructose 1,6-bisphosphate + H2O = beta-D-fructose 6-phosphate + phosphate. The protein operates within carbohydrate biosynthesis; gluconeogenesis. The polypeptide is Fructose-1,6-bisphosphatase class 3 (Staphylococcus aureus (strain USA300)).